A 415-amino-acid polypeptide reads, in one-letter code: 4-hydroxy-3-methylbut-2-enyl diphosphate reductase (415 aa).

C66 is a [4Fe-4S] cluster binding site. H96 contributes to the (2E)-4-hydroxy-3-methylbut-2-enyl diphosphate binding site. H96 is a dimethylallyl diphosphate binding site. H96 contributes to the isopentenyl diphosphate binding site. C158 provides a ligand contact to [4Fe-4S] cluster. H186 lines the (2E)-4-hydroxy-3-methylbut-2-enyl diphosphate pocket. H186 provides a ligand contact to dimethylallyl diphosphate. H186 is a binding site for isopentenyl diphosphate. Residue E188 is the Proton donor of the active site. A (2E)-4-hydroxy-3-methylbut-2-enyl diphosphate-binding site is contributed by T259. Position 297 (C297) interacts with [4Fe-4S] cluster. Residues S326, S327, N328, and S388 each coordinate (2E)-4-hydroxy-3-methylbut-2-enyl diphosphate. The dimethylallyl diphosphate site is built by S326, S327, N328, and S388. 4 residues coordinate isopentenyl diphosphate: S326, S327, N328, and S388.

Belongs to the IspH family. Requires [4Fe-4S] cluster as cofactor.

It carries out the reaction isopentenyl diphosphate + 2 oxidized [2Fe-2S]-[ferredoxin] + H2O = (2E)-4-hydroxy-3-methylbut-2-enyl diphosphate + 2 reduced [2Fe-2S]-[ferredoxin] + 2 H(+). The enzyme catalyses dimethylallyl diphosphate + 2 oxidized [2Fe-2S]-[ferredoxin] + H2O = (2E)-4-hydroxy-3-methylbut-2-enyl diphosphate + 2 reduced [2Fe-2S]-[ferredoxin] + 2 H(+). Its pathway is isoprenoid biosynthesis; dimethylallyl diphosphate biosynthesis; dimethylallyl diphosphate from (2E)-4-hydroxy-3-methylbutenyl diphosphate: step 1/1. The protein operates within isoprenoid biosynthesis; isopentenyl diphosphate biosynthesis via DXP pathway; isopentenyl diphosphate from 1-deoxy-D-xylulose 5-phosphate: step 6/6. Functionally, catalyzes the conversion of 1-hydroxy-2-methyl-2-(E)-butenyl 4-diphosphate (HMBPP) into a mixture of isopentenyl diphosphate (IPP) and dimethylallyl diphosphate (DMAPP). Acts in the terminal step of the DOXP/MEP pathway for isoprenoid precursor biosynthesis. This Acaryochloris marina (strain MBIC 11017) protein is 4-hydroxy-3-methylbut-2-enyl diphosphate reductase.